Here is a 496-residue protein sequence, read N- to C-terminus: Glycerol kinase (496 aa).

Residue Thr11 coordinates ADP. The ATP site is built by Thr11, Thr12, and Ser13. Residue Thr11 coordinates sn-glycerol 3-phosphate. Arg15 provides a ligand contact to ADP. Sn-glycerol 3-phosphate-binding residues include Arg81, Glu82, Tyr133, and Asp242. 5 residues coordinate glycerol: Arg81, Glu82, Tyr133, Asp242, and Gln243. ADP contacts are provided by Thr264 and Gly307. Thr264, Gly307, and Gln311 together coordinate ATP. Asn413 contributes to the ADP binding site.

It belongs to the FGGY kinase family.

It catalyses the reaction glycerol + ATP = sn-glycerol 3-phosphate + ADP + H(+). Its pathway is polyol metabolism; glycerol degradation via glycerol kinase pathway; sn-glycerol 3-phosphate from glycerol: step 1/1. Inhibited by fructose 1,6-bisphosphate (FBP). Its function is as follows. Key enzyme in the regulation of glycerol uptake and metabolism. Catalyzes the phosphorylation of glycerol to yield sn-glycerol 3-phosphate. This Borrelia duttonii (strain Ly) protein is Glycerol kinase.